The sequence spans 77 residues: uncharacterized protein (77 aa).

2 consecutive transmembrane segments (helical) span residues 22–42 (VFANGIILITAYYLVFELPVG) and 44–64 (LIGLYIIMFVVWLLVSMFFLG).

It localises to the cell membrane. This is an uncharacterized protein from Methanocaldococcus jannaschii (strain ATCC 43067 / DSM 2661 / JAL-1 / JCM 10045 / NBRC 100440) (Methanococcus jannaschii).